The primary structure comprises 100 residues: MGALTKAEMAERLYEELGLNKREAKELVELFFEEIRHALEDNEQVKLSGFGNFDLRDKRQRPGRNPKTGEEIPITARRVVTFRPGQKLKARVEAYAGTKS.

A disordered region spans residues 54-73 (DLRDKRQRPGRNPKTGEEIP).

It belongs to the bacterial histone-like protein family. As to quaternary structure, heterodimer of an alpha and a beta chain.

Functionally, this protein is one of the two subunits of integration host factor, a specific DNA-binding protein that functions in genetic recombination as well as in transcriptional and translational control. The sequence is that of Integration host factor subunit alpha from Pseudomonas savastanoi pv. phaseolicola (strain 1448A / Race 6) (Pseudomonas syringae pv. phaseolicola (strain 1448A / Race 6)).